The chain runs to 248 residues: MYRNQYDSDITTFSPSGRIHQIEYAMEAVKQGGAAVALKSKQFAVLVSLKRSSSELGSYQKKIFVVDDHVGIAISGLTADARMLCNYMRNECSNYNYVYESQMRVERLVTKVADKHQVHTQRYGRRPYGVGLLVAGYDQLGAHIYQTCPSGNFYDYKSISIGSRSQSAKTYLEKHFESFEECTLEQLITHGLRALRETIPNTDDTLNSKNVSIGIVGEGQPFKIIEEADAQPYLNLLENEEPVEMQTN.

It belongs to the peptidase T1A family. The 26S proteasome consists of a 20S proteasome core and two 19S regulatory subunits. The 20S proteasome core is composed of 28 subunits that are arranged in four stacked rings, resulting in a barrel-shaped structure. The two end rings are each formed by seven alpha subunits, and the two central rings are each formed by seven beta subunits. The catalytic chamber with the active sites is on the inside of the barrel.

Its subcellular location is the cytoplasm. The protein resides in the nucleus. Functionally, the proteasome is a multicatalytic proteinase complex which is characterized by its ability to cleave peptides with Arg, Phe, Tyr, Leu, and Glu adjacent to the leaving group at neutral or slightly basic pH. The proteasome has an ATP-dependent proteolytic activity. In Dictyostelium discoideum (Social amoeba), this protein is Proteasome subunit alpha type-1 (psmA1).